The primary structure comprises 306 residues: Phosphatidylserine decarboxylase proenzyme (306 aa).

Catalysis depends on charge relay system; for autoendoproteolytic cleavage activity residues Asp98, His155, and Ser259. Ser259 acts as the Schiff-base intermediate with substrate; via pyruvic acid; for decarboxylase activity in catalysis. Ser259 bears the Pyruvic acid (Ser); by autocatalysis mark.

It belongs to the phosphatidylserine decarboxylase family. PSD-B subfamily. Prokaryotic type I sub-subfamily. Heterodimer of a large membrane-associated beta subunit and a small pyruvoyl-containing alpha subunit. The cofactor is pyruvate. In terms of processing, is synthesized initially as an inactive proenzyme. Formation of the active enzyme involves a self-maturation process in which the active site pyruvoyl group is generated from an internal serine residue via an autocatalytic post-translational modification. Two non-identical subunits are generated from the proenzyme in this reaction, and the pyruvate is formed at the N-terminus of the alpha chain, which is derived from the carboxyl end of the proenzyme. The autoendoproteolytic cleavage occurs by a canonical serine protease mechanism, in which the side chain hydroxyl group of the serine supplies its oxygen atom to form the C-terminus of the beta chain, while the remainder of the serine residue undergoes an oxidative deamination to produce ammonia and the pyruvoyl prosthetic group on the alpha chain. During this reaction, the Ser that is part of the protease active site of the proenzyme becomes the pyruvoyl prosthetic group, which constitutes an essential element of the active site of the mature decarboxylase.

It localises to the cell membrane. It catalyses the reaction a 1,2-diacyl-sn-glycero-3-phospho-L-serine + H(+) = a 1,2-diacyl-sn-glycero-3-phosphoethanolamine + CO2. It participates in phospholipid metabolism; phosphatidylethanolamine biosynthesis; phosphatidylethanolamine from CDP-diacylglycerol: step 2/2. Its function is as follows. Catalyzes the formation of phosphatidylethanolamine (PtdEtn) from phosphatidylserine (PtdSer). This Nitrosococcus oceani (strain ATCC 19707 / BCRC 17464 / JCM 30415 / NCIMB 11848 / C-107) protein is Phosphatidylserine decarboxylase proenzyme.